The sequence spans 988 residues: Transposase for transposon Tn1546 (988 aa).

The protein belongs to the transposase 7 family.

Functionally, required for transposition of transposon Tn1546. In Enterococcus faecium (Streptococcus faecium), this protein is Transposase for transposon Tn1546.